The primary structure comprises 488 residues: 3-octaprenyl-4-hydroxybenzoate carboxy-lyase (488 aa).

Mn(2+) is bound at residue Asn172. Prenylated FMN contacts are provided by residues 175 to 177, 189 to 191, and 194 to 195; these read IYR, RWL, and RG. A Mn(2+)-binding site is contributed by Glu238. The active-site Proton donor is Asp287.

The protein belongs to the UbiD family. Homohexamer. Prenylated FMN is required as a cofactor. It depends on Mn(2+) as a cofactor.

Its subcellular location is the cell membrane. The enzyme catalyses a 4-hydroxy-3-(all-trans-polyprenyl)benzoate + H(+) = a 2-(all-trans-polyprenyl)phenol + CO2. The protein operates within cofactor biosynthesis; ubiquinone biosynthesis. Catalyzes the decarboxylation of 3-octaprenyl-4-hydroxy benzoate to 2-octaprenylphenol, an intermediate step in ubiquinone biosynthesis. The polypeptide is 3-octaprenyl-4-hydroxybenzoate carboxy-lyase (Pseudomonas fluorescens (strain SBW25)).